Consider the following 665-residue polypeptide: Protein Fe65 homolog (665 aa).

Residues 1 to 12 (MREGTPRVRIEV) show a composition bias toward basic and acidic residues. Disordered regions lie at residues 1–43 (MREG…DTAT) and 90–111 (SRGY…RRRN). Residues 14–24 (KGSNRPSQFVS) show a composition bias toward polar residues. Composition is skewed to basic and acidic residues over residues 27-40 (EEQR…RDSD) and 102-111 (GRREEERRRN). In terms of domain architecture, WW spans 233–266 (KDLPPGWEKHEDPQGYSYYWHVDSGTIQRQPPPP). PID domains follow at residues 330–456 (VRFA…RDIC) and 499–615 (FLGV…VLDA).

Interacts (via PID 2 domain) with apl-1 (via cytoplasmic domain). Phosphorylated. As to expression, expressed in the pharynx (including pharyngeal muscle and nerve cells), ventral nerve cord and tail neurons.

Its subcellular location is the cytoplasm. It localises to the cytoskeleton. In terms of biological role, modulates pharyngeal pumping activity, at least in part by regulating expression of the acetylcholinesterase genes ace-1 and ace-2. The chain is Protein Fe65 homolog from Caenorhabditis elegans.